Here is a 234-residue protein sequence, read N- to C-terminus: Ubiquinone biosynthesis O-methyltransferase (234 aa).

S-adenosyl-L-methionine-binding residues include Arg40, Gly59, Asp80, and Met123.

The protein belongs to the methyltransferase superfamily. UbiG/COQ3 family.

The catalysed reaction is a 3-demethylubiquinol + S-adenosyl-L-methionine = a ubiquinol + S-adenosyl-L-homocysteine + H(+). It catalyses the reaction a 3-(all-trans-polyprenyl)benzene-1,2-diol + S-adenosyl-L-methionine = a 2-methoxy-6-(all-trans-polyprenyl)phenol + S-adenosyl-L-homocysteine + H(+). The protein operates within cofactor biosynthesis; ubiquinone biosynthesis. Functionally, O-methyltransferase that catalyzes the 2 O-methylation steps in the ubiquinone biosynthetic pathway. This is Ubiquinone biosynthesis O-methyltransferase from Coxiella burnetii (strain CbuK_Q154) (Coxiella burnetii (strain Q154)).